An 82-amino-acid chain; its full sequence is Sulfur carrier protein TusA (82 aa).

Cysteine 19 (cysteine persulfide intermediate) is an active-site residue.

The protein belongs to the sulfur carrier protein TusA family. As to quaternary structure, interacts with IscS.

The protein localises to the cytoplasm. It functions in the pathway tRNA modification. Sulfur carrier protein involved in sulfur trafficking in the cell. Part of a sulfur-relay system required for 2-thiolation during synthesis of 2-thiouridine of the modified wobble base 5-methylaminomethyl-2-thiouridine (mnm(5)s(2)U) in tRNA. Interacts with IscS and stimulates its cysteine desulfurase activity. Accepts an activated sulfur from IscS, which is then transferred to TusD, and thus determines the direction of sulfur flow from IscS to 2-thiouridine formation. Also appears to be involved in sulfur transfer for the biosynthesis of molybdopterin. This is Sulfur carrier protein TusA from Edwardsiella ictaluri (strain 93-146).